Here is a 352-residue protein sequence, read N- to C-terminus: Palmitoyltransferase PFA5 (352 aa).

The next 2 membrane-spanning stretches (helical) occupy residues 12-32 and 53-73; these read YWTI…GTWA and IGLI…WVLI. The region spanning 114 to 164 is the DHHC domain; the sequence is VWCSNCQSLKVGRTKHSSHQGHCVPRFDHYCVWLGAVIGFKNYRLFVQFVF. Catalysis depends on Cys-144, which acts as the S-palmitoyl cysteine intermediate. A run of 2 helical transmembrane segments spans residues 159-179 and 195-215; these read FVQF…TISV and LIVL…LFVS.

It belongs to the DHHC palmitoyltransferase family. PFA5 subfamily.

The protein resides in the membrane. It catalyses the reaction L-cysteinyl-[protein] + hexadecanoyl-CoA = S-hexadecanoyl-L-cysteinyl-[protein] + CoA. The protein is Palmitoyltransferase PFA5 (PFA5) of Candida glabrata (strain ATCC 2001 / BCRC 20586 / JCM 3761 / NBRC 0622 / NRRL Y-65 / CBS 138) (Yeast).